The chain runs to 782 residues: Coiled-coil alpha-helical rod protein 1 (782 aa).

Basic and acidic residues-rich tracts occupy residues 62 to 74 and 208 to 218; these read ERDV…EPGR and ETRRAGEAKEL. Disordered regions lie at residues 62–82 and 177–218; these read ERDV…WGLE and EQLS…AKEL. Coiled coils occupy residues 82 to 314, 344 to 437, and 498 to 691; these read EGSQ…ELTR, LMVQ…NAVS, and VADV…QQEG.

It localises to the cytoplasm. It is found in the nucleus. Functionally, may be a regulator of keratinocyte proliferation or differentiation. This chain is Coiled-coil alpha-helical rod protein 1 (CCHCR1), found in Pan troglodytes (Chimpanzee).